Consider the following 885-residue polypeptide: Initiator protein NS1 (885 aa).

The disordered stretch occupies residues 404–477; sequence AEAGPSGTQP…GREDIFSGAP (74 aa). Residues 409-423 are compositionally biased toward polar residues; the sequence is SGTQPVETAQQSPPT. Gly residues predominate over residues 452–465; that stretch reads QAAGGSEMGAGGSA.

This sequence belongs to the parvoviruses initiator protein NS1 family. Homooligomer. Requires Mg(2+) as cofactor.

It localises to the host nucleus. The enzyme catalyses ATP + H2O = ADP + phosphate + H(+). Multifunctional protein which displays endonuclease and helicase activities required for initiating and directing viral DNA replication. Also plays a role in viral packaging and transactivation of several promoters. Binds site-specifically to 2-3 approximate tandem copies within the origins of replication (Ori), unwinds this hairpin region and nicks one DNA strand thereby initiating the rolling circle replication (RCR). The polypeptide is Initiator protein NS1 (Bombyx mori densovirus (BmDNV)).